The following is a 476-amino-acid chain: Membrane-bound lytic murein transglycosylase F (476 aa).

The signal sequence occupies residues 1–22 (MTRFLFALILGFLLTACQQVTV). Residues 23 to 257 (DETEFVPKKL…HLNEKYFGHV (235 aa)) are non-LT domain. Residues 258 to 476 (KRFDYVDTRA…AGTLSPEQPK (219 aa)) form an LT domain region. Residue Glu-302 is part of the active site. Positions 446-476 (SKQQNPEEEPSDLASEEPAIPAGTLSPEQPK) are disordered. Residues 451–460 (PEEEPSDLAS) are compositionally biased toward acidic residues.

In the N-terminal section; belongs to the bacterial solute-binding protein 3 family. The protein in the C-terminal section; belongs to the transglycosylase Slt family.

It is found in the cell outer membrane. It catalyses the reaction Exolytic cleavage of the (1-&gt;4)-beta-glycosidic linkage between N-acetylmuramic acid (MurNAc) and N-acetylglucosamine (GlcNAc) residues in peptidoglycan, from either the reducing or the non-reducing ends of the peptidoglycan chains, with concomitant formation of a 1,6-anhydrobond in the MurNAc residue.. Its function is as follows. Murein-degrading enzyme that degrades murein glycan strands and insoluble, high-molecular weight murein sacculi, with the concomitant formation of a 1,6-anhydromuramoyl product. Lytic transglycosylases (LTs) play an integral role in the metabolism of the peptidoglycan (PG) sacculus. Their lytic action creates space within the PG sacculus to allow for its expansion as well as for the insertion of various structures such as secretion systems and flagella. This Shewanella baltica (strain OS155 / ATCC BAA-1091) protein is Membrane-bound lytic murein transglycosylase F.